Consider the following 308-residue polypeptide: MISPAQDPYASRTDRSSAIIARQDPVVYGEGKFADALSADQVQSYERDGFLLLENLFSDEEVAALLAEVERMTRDPAIVRREEAITEPGSNAVRSIFMVHVLSPILGRLVRDPRLANAARQILGAEVYVHQSRANMKPGFKGKEFYWHSDFETWHVEDGMPSMRALSCSVLLTDNNEANGPLMLVPGSHRQFISCVGETPRDHYKQSLKKQEYGVPDPVSLQLLAEQGGISTMTGKAGSVVFFDCNTMHGSNSNISPWPRANVFMVYNSMENTLNPPKYGLNPRPEHIATRQAFKAVRPLDSLKLVER.

Gln131 contributes to the L-ectoine binding site. 2-oxoglutarate is bound at residue Lys137. His148, Asp150, and His249 together coordinate Fe cation.

The protein belongs to the PhyH family. EctD subfamily. As to quaternary structure, homodimer. The cofactor is Fe(2+).

It catalyses the reaction L-ectoine + 2-oxoglutarate + O2 = 5-hydroxyectoine + succinate + CO2. Its function is as follows. Involved in the biosynthesis of 5-hydroxyectoine, called compatible solute, which helps organisms to survive extreme osmotic stress by acting as a highly soluble organic osmolyte. Catalyzes the 2-oxoglutarate-dependent selective hydroxylation of L-ectoine to yield (4S,5S)-5-hydroxyectoine. The chain is Ectoine dioxygenase from Bordetella parapertussis (strain 12822 / ATCC BAA-587 / NCTC 13253).